A 277-amino-acid chain; its full sequence is Myelin proteolipid protein (277 aa).

Topologically, residues 2–9 (GLLECCAR) are cytoplasmic. Residues Cys-6, Cys-7, and Cys-10 are each lipidated (S-palmitoyl cysteine). Residues 10 to 36 (CLVGAPFASLVATGLCFFGVALFCGCG) traverse the membrane as a helical segment. The Extracellular portion of the chain corresponds to 37–63 (HEALTGTEKLIETYFSKNYQDYEYLIN). The helical transmembrane segment at 64–88 (VIHAFQYVIYGTASFFFLYGALLLA) threads the bilayer. Topologically, residues 89–151 (EGFYTTGAVR…LGKWLGHPDK (63 aa)) are cytoplasmic. Cys-109 carries S-palmitoyl cysteine lipidation. Ser-114 carries the phosphoserine modification. A phosphothreonine mark is found at Thr-116 and Thr-118. Residues Cys-139 and Cys-141 are each lipidated (S-palmitoyl cysteine). A helical transmembrane segment spans residues 152-177 (FVGITYALTVVWLLVFACSAVPVYIY). The Extracellular portion of the chain corresponds to 178 to 233 (FNTWTTCQSIAFPSKTSASIGSLCADARMYGVLPWNAFPGKVCGSNLLSICKTAEF). 2 disulfide bridges follow: Cys-184–Cys-228 and Cys-201–Cys-220. Ser-199 carries O-palmitoyl serine lipidation. Residues 234 to 260 (QMTFHLFIAAFVGAAATLVSLLTFMIA) form a helical membrane-spanning segment. Residues 261-277 (ATYNFAVLKLMGRGTKF) are Cytoplasmic-facing.

It belongs to the myelin proteolipid protein family. Interacts with MAL.

It is found in the cell membrane. The protein localises to the myelin membrane. Functionally, this is the major myelin protein from the central nervous system. It plays an important role in the formation or maintenance of the multilamellar structure of myelin. The sequence is that of Myelin proteolipid protein (Plp1) from Mus musculus (Mouse).